The sequence spans 150 residues: MITLNTLKDSTRKRKPRKRVGRGIGSKHGKTCGRGEKGAGARSGYKRRLGKEGGQMPLFMKLPLRGFSNAQFRRQFDVINLDQIEAVFKDGETVDELSLRERGFISGRTHGIKLLGNGDLTKKVKIHVHAISESAREKLTQAKVSFEIVK.

Residues 1 to 52 (MITLNTLKDSTRKRKPRKRVGRGIGSKHGKTCGRGEKGAGARSGYKRRLGKE) are disordered. Residues 11-31 (TRKRKPRKRVGRGIGSKHGKT) show a composition bias toward basic residues.

Belongs to the universal ribosomal protein uL15 family. As to quaternary structure, part of the 50S ribosomal subunit.

In terms of biological role, binds to the 23S rRNA. This Protochlamydia amoebophila (strain UWE25) protein is Large ribosomal subunit protein uL15.